The primary structure comprises 200 residues: Superoxide dismutase [Mn] 2 (200 aa).

Mn(2+)-binding residues include histidine 28, histidine 76, aspartate 158, and histidine 162.

The protein belongs to the iron/manganese superoxide dismutase family. It depends on Mn(2+) as a cofactor.

It carries out the reaction 2 superoxide + 2 H(+) = H2O2 + O2. In terms of biological role, destroys superoxide anion radicals which are normally produced within the cells and which are toxic to biological systems. This Halobacterium salinarum (strain ATCC 700922 / JCM 11081 / NRC-1) (Halobacterium halobium) protein is Superoxide dismutase [Mn] 2 (sod2).